Consider the following 496-residue polypeptide: Aminoacetaldehyde dehydrogenase (496 aa).

6 residues coordinate NADH: Leu-166, Trp-168, Lys-192, Ser-246, Thr-249, and Tyr-256. Glu-268 (proton acceptor) is an active-site residue. An NADH-binding site is contributed by Cys-269. The active-site Nucleophile is Cys-303. 2 residues coordinate NADH: Lys-353 and Glu-398.

This sequence belongs to the aldehyde dehydrogenase family. In terms of assembly, homotetramer, formed by two symmetrical dimers.

The catalysed reaction is aminoacetaldehyde + NAD(+) + H2O = glycine + NADH + 2 H(+). The enzyme catalyses 3-aminopropanal + NAD(+) + H2O = beta-alanine + NADH + 2 H(+). Its function is as follows. NAD(+)-dependent aminoaldehyde dehydrogenase highly efficient with protonated aminoacetaldehyde (ACTAL) and 3-aminopropanaldehyde (APAL). Likely participates in a still uncharacterized metabolic pathway present in proteobacteria species, in which ACTAL might be an intermediate, yielding glycine. Highly prefers NAD(+) over NADP(+). Shows very poor activity with acetaldehyde, propanaldehyde, butanaldehyde, pentanaldehyde, dimethylaminoacetaldehyde, trimethylaminoacetaldehyde (betaine aldehyde), trimethylaminobutanaldehyde, short aliphatic hydroxyaldehydes such as 3-hydroxypropanaldehyde and 2-hydroxypropanaldehyde (lactaldehyde), and aromatic aldehydes. This is Aminoacetaldehyde dehydrogenase from Pseudomonas aeruginosa (strain ATCC 15692 / DSM 22644 / CIP 104116 / JCM 14847 / LMG 12228 / 1C / PRS 101 / PAO1).